Reading from the N-terminus, the 217-residue chain is 3-demethoxyubiquinol 3-hydroxylase (217 aa).

Residues glutamate 66, glutamate 96, histidine 99, glutamate 148, glutamate 180, and histidine 183 each coordinate Fe cation.

The protein belongs to the COQ7 family. Requires Fe cation as cofactor.

It is found in the cell membrane. The catalysed reaction is a 5-methoxy-2-methyl-3-(all-trans-polyprenyl)benzene-1,4-diol + AH2 + O2 = a 3-demethylubiquinol + A + H2O. Its pathway is cofactor biosynthesis; ubiquinone biosynthesis. In terms of biological role, catalyzes the hydroxylation of 2-nonaprenyl-3-methyl-6-methoxy-1,4-benzoquinol during ubiquinone biosynthesis. The polypeptide is 3-demethoxyubiquinol 3-hydroxylase (Xylella fastidiosa (strain 9a5c)).